Here is a 952-residue protein sequence, read N- to C-terminus: UvrABC system protein A (952 aa).

38-45 (GLSGSGKS) is a binding site for ATP. The segment at 259–286 (CDKCGFSISELEPRLFSFNSPLGSCSYC) adopts a C4-type zinc-finger fold. ABC transporter domains follow at residues 316 to 595 (FKNI…SNSI) and 615 to 944 (GNGK…QYLS). 647–654 (GVSGSGKS) is a binding site for ATP. The segment at 746-772 (CDKCFGDGVIRIEMHFLPDVYVKCEVC) adopts a C4-type zinc-finger fold.

The protein belongs to the ABC transporter superfamily. UvrA family. As to quaternary structure, forms a heterotetramer with UvrB during the search for lesions.

It is found in the cytoplasm. In terms of biological role, the UvrABC repair system catalyzes the recognition and processing of DNA lesions. UvrA is an ATPase and a DNA-binding protein. A damage recognition complex composed of 2 UvrA and 2 UvrB subunits scans DNA for abnormalities. When the presence of a lesion has been verified by UvrB, the UvrA molecules dissociate. This is UvrABC system protein A from Mycoplasma genitalium (strain ATCC 33530 / DSM 19775 / NCTC 10195 / G37) (Mycoplasmoides genitalium).